A 252-amino-acid polypeptide reads, in one-letter code: 3-deoxy-manno-octulosonate cytidylyltransferase (252 aa).

This sequence belongs to the KdsB family.

It localises to the cytoplasm. The catalysed reaction is 3-deoxy-alpha-D-manno-oct-2-ulosonate + CTP = CMP-3-deoxy-beta-D-manno-octulosonate + diphosphate. The protein operates within nucleotide-sugar biosynthesis; CMP-3-deoxy-D-manno-octulosonate biosynthesis; CMP-3-deoxy-D-manno-octulosonate from 3-deoxy-D-manno-octulosonate and CTP: step 1/1. It functions in the pathway bacterial outer membrane biogenesis; lipopolysaccharide biosynthesis. Its function is as follows. Activates KDO (a required 8-carbon sugar) for incorporation into bacterial lipopolysaccharide in Gram-negative bacteria. The sequence is that of 3-deoxy-manno-octulosonate cytidylyltransferase from Trichlorobacter lovleyi (strain ATCC BAA-1151 / DSM 17278 / SZ) (Geobacter lovleyi).